A 155-amino-acid polypeptide reads, in one-letter code: Large ribosomal subunit protein eL24 (155 aa).

A compositionally biased stretch (basic and acidic residues) spans 94–129 (RSLKPEVRKAQRDEKKKADKEKKKADKAARKSEKAK). The interval 94–155 (RSLKPEVRKA…AFQKVAATSR (62 aa)) is disordered.

This sequence belongs to the eukaryotic ribosomal protein eL24 family.

The polypeptide is Large ribosomal subunit protein eL24 (RPL24) (Kluyveromyces lactis (strain ATCC 8585 / CBS 2359 / DSM 70799 / NBRC 1267 / NRRL Y-1140 / WM37) (Yeast)).